The sequence spans 414 residues: 3-isopropylmalate dehydratase large subunit (414 aa).

The [4Fe-4S] cluster site is built by Cys295, Cys353, and Cys356.

It belongs to the aconitase/IPM isomerase family. LeuC type 2 subfamily. In terms of assembly, heterodimer of LeuC and LeuD. [4Fe-4S] cluster serves as cofactor.

The enzyme catalyses (2R,3S)-3-isopropylmalate = (2S)-2-isopropylmalate. The protein operates within amino-acid biosynthesis; L-leucine biosynthesis; L-leucine from 3-methyl-2-oxobutanoate: step 2/4. Catalyzes the isomerization between 2-isopropylmalate and 3-isopropylmalate, via the formation of 2-isopropylmaleate. The chain is 3-isopropylmalate dehydratase large subunit from Pyrobaculum islandicum (strain DSM 4184 / JCM 9189 / GEO3).